Consider the following 2476-residue polypeptide: Non-reducing polyketide synthase pkdA (2476 aa).

The segment at 22–230 (PNLNDAYLQS…VISEARLATL (209 aa)) is N-terminal acylcarrier protein transacylase domain (SAT). C142 functions as the Nucleophile; for transacylase activity in the catalytic mechanism. The Proton donor/acceptor; for transacylase activity role is filled by H261. Residues 388–805 (DESIAVVGMA…GSNASLVVTQ (418 aa)) form the Ketosynthase family 3 (KS3) domain. Catalysis depends on for beta-ketoacyl synthase activity residues C554, H689, and H728. Residues 919–1204 (FGGQRSSFVG…GSGVTNLASR (286 aa)) form a malonyl-CoA:ACP transacylase (MAT) region. The tract at residues 1290 to 1417 (QKGLWTFVGY…GRITFQTPKQ (128 aa)) is N-terminal hotdog fold. The PKS/mFAS DH domain occupies 1290 to 1592 (QKGLWTFVGY…FVEVSIAGMS (303 aa)). The tract at residues 1321 to 1590 (YVSAHVIAQT…LHFVEVSIAG (270 aa)) is product template (PT) domain. The active-site Proton acceptor; for dehydratase activity is H1325. The C-terminal hotdog fold stretch occupies residues 1445 to 1592 (QTIQGSRNIY…FVEVSIAGMS (148 aa)). D1501 acts as the Proton donor; for dehydratase activity in catalysis. Positions 1626–1649 (DVSKNEKDAKAPSKKKESTSKSPG) are disordered. Residues 1650–1724 (HDILARVRTL…SLVKCIGANM (75 aa)) enclose the Carrier domain. S1684 is modified (O-(pantetheine 4'-phosphoryl)serine). The interval 1727–1766 (SDTSRTGDDSSDDLETASAESETSSGINNEDSHNIDRQQI) is disordered. A compositionally biased stretch (low complexity) spans 1742 to 1751 (TASAESETSS). The tract at residues 1881-2030 (ELLRQYPEHA…DCEKTPSSHL (150 aa)) is methyltransferase (CMeT) domain. The interval 2094–2340 (VTGATGSLGS…SWCPVDDVAA (247 aa)) is NADPH-binding domain.

It depends on pantetheine 4'-phosphate as a cofactor.

It carries out the reaction propanoyl-CoA + 3 malonyl-CoA + AH2 + 2 S-adenosyl-L-methionine + H(+) = 2-ethyl-4,6-dihydroxy-3,5-dimethylbenzaldehyde + A + 2 S-adenosyl-L-homocysteine + 3 CO2 + 4 CoA + H2O. Its pathway is secondary metabolite biosynthesis. Functionally, non-reducing polyketide synthase that synthesizes 6-ethyl-2,4-dihydroxy-3,5-dimethylbenzaldehyde via condensation of one propanoyl-CoA starter unit with 3 malonyl-CoA units, as well as 2 methylation steps. The sequence is that of Non-reducing polyketide synthase pkdA from Emericella nidulans (strain FGSC A4 / ATCC 38163 / CBS 112.46 / NRRL 194 / M139) (Aspergillus nidulans).